The sequence spans 181 residues: Major urinary protein (181 aa).

Residues 1–19 (MKLLLLLLCLGLTLVCGHA) form the signal peptide. Asn-54 carries an N-linked (GlcNAc...) asparagine glycan. An intrachain disulfide couples Cys-83 to Cys-176.

It belongs to the calycin superfamily. Lipocalin family. Abundant in the urine of adult male rats but absent from that of females.

It localises to the cytoplasm. The protein localises to the cytosol. The protein resides in the secreted. Its function is as follows. Major urinary proteins (Mups) bind and release pheromones. They may also protect pheromones from oxidation. In this context, they play a role in the regulation of social behaviors, such as aggression, mating, pup-suckling, territory establishment and dominance. Acts as a kairomone, detected by the prey vomeronasal organ and inducing fear reactions in mice. The sequence is that of Major urinary protein from Rattus norvegicus (Rat).